Reading from the N-terminus, the 251-residue chain is Ubiquinone/menaquinone biosynthesis C-methyltransferase UbiE (251 aa).

S-adenosyl-L-methionine is bound by residues threonine 74, aspartate 95, and 123-124 (NA).

The protein belongs to the class I-like SAM-binding methyltransferase superfamily. MenG/UbiE family.

It carries out the reaction a 2-demethylmenaquinol + S-adenosyl-L-methionine = a menaquinol + S-adenosyl-L-homocysteine + H(+). It catalyses the reaction a 2-methoxy-6-(all-trans-polyprenyl)benzene-1,4-diol + S-adenosyl-L-methionine = a 5-methoxy-2-methyl-3-(all-trans-polyprenyl)benzene-1,4-diol + S-adenosyl-L-homocysteine + H(+). Its pathway is quinol/quinone metabolism; menaquinone biosynthesis; menaquinol from 1,4-dihydroxy-2-naphthoate: step 2/2. The protein operates within cofactor biosynthesis; ubiquinone biosynthesis. Functionally, methyltransferase required for the conversion of demethylmenaquinol (DMKH2) to menaquinol (MKH2) and the conversion of 2-polyprenyl-6-methoxy-1,4-benzoquinol (DDMQH2) to 2-polyprenyl-3-methyl-6-methoxy-1,4-benzoquinol (DMQH2). The sequence is that of Ubiquinone/menaquinone biosynthesis C-methyltransferase UbiE from Shewanella woodyi (strain ATCC 51908 / MS32).